Here is a 1342-residue protein sequence, read N- to C-terminus: DNA-directed RNA polymerase subunit beta (1342 aa).

The protein belongs to the RNA polymerase beta chain family. In terms of assembly, the RNAP catalytic core consists of 2 alpha, 1 beta, 1 beta' and 1 omega subunit. When a sigma factor is associated with the core the holoenzyme is formed, which can initiate transcription.

The catalysed reaction is RNA(n) + a ribonucleoside 5'-triphosphate = RNA(n+1) + diphosphate. Functionally, DNA-dependent RNA polymerase catalyzes the transcription of DNA into RNA using the four ribonucleoside triphosphates as substrates. This Vibrio campbellii (strain ATCC BAA-1116) protein is DNA-directed RNA polymerase subunit beta.